The primary structure comprises 432 residues: Gamma-glutamyl phosphate reductase (432 aa).

This sequence belongs to the gamma-glutamyl phosphate reductase family.

It is found in the cytoplasm. The catalysed reaction is L-glutamate 5-semialdehyde + phosphate + NADP(+) = L-glutamyl 5-phosphate + NADPH + H(+). Its pathway is amino-acid biosynthesis; L-proline biosynthesis; L-glutamate 5-semialdehyde from L-glutamate: step 2/2. Functionally, catalyzes the NADPH-dependent reduction of L-glutamate 5-phosphate into L-glutamate 5-semialdehyde and phosphate. The product spontaneously undergoes cyclization to form 1-pyrroline-5-carboxylate. The polypeptide is Gamma-glutamyl phosphate reductase (Methylorubrum populi (strain ATCC BAA-705 / NCIMB 13946 / BJ001) (Methylobacterium populi)).